The primary structure comprises 160 residues: SsrA-binding protein (160 aa).

The disordered stretch occupies residues 131–160 (KKEYDKRHTERERDSDRELQRAVRTKGKED).

The protein belongs to the SmpB family.

It is found in the cytoplasm. Its function is as follows. Required for rescue of stalled ribosomes mediated by trans-translation. Binds to transfer-messenger RNA (tmRNA), required for stable association of tmRNA with ribosomes. tmRNA and SmpB together mimic tRNA shape, replacing the anticodon stem-loop with SmpB. tmRNA is encoded by the ssrA gene; the 2 termini fold to resemble tRNA(Ala) and it encodes a 'tag peptide', a short internal open reading frame. During trans-translation Ala-aminoacylated tmRNA acts like a tRNA, entering the A-site of stalled ribosomes, displacing the stalled mRNA. The ribosome then switches to translate the ORF on the tmRNA; the nascent peptide is terminated with the 'tag peptide' encoded by the tmRNA and targeted for degradation. The ribosome is freed to recommence translation, which seems to be the essential function of trans-translation. The protein is SsrA-binding protein of Pseudomonas fluorescens (strain ATCC BAA-477 / NRRL B-23932 / Pf-5).